Here is a 291-residue protein sequence, read N- to C-terminus: Nucleotide-binding protein CMM_1747 (291 aa).

Residue 15 to 22 (GMSGAGRS) coordinates ATP. A GTP-binding site is contributed by 66-69 (DVRG).

Belongs to the RapZ-like family.

Functionally, displays ATPase and GTPase activities. In Clavibacter michiganensis subsp. michiganensis (strain NCPPB 382), this protein is Nucleotide-binding protein CMM_1747.